We begin with the raw amino-acid sequence, 213 residues long: NDR1/HIN1-like protein 26 (213 aa).

Residues 1–27 (MSQISITSPKHCAKKGGININNRHKKL) are Cytoplasmic-facing. The helical transmembrane segment at 28-48 (FFTFSTFFSGLLLIIFLVWLI) threads the bilayer. Topologically, residues 49-213 (LHPERPEFSL…LQGTRCSTTI (165 aa)) are lumenal. Asn67, Asn77, and Asn195 each carry an N-linked (GlcNAc...) asparagine glycan.

As to expression, expressed in the vasculature of roots, rosette leaves, stems, cauline leaves and flowers. Specifically expressed in phloem.

Its subcellular location is the cell junction. It is found in the plasmodesma. The protein localises to the endoplasmic reticulum membrane. Functionally, involved in the regulation of sugar, amino acid and some primary metabolite export from companion cells (CCs) to sieve elements (SEs) in phloem. Required for apoplastic phloem sugar loading in source leaves in order to transport it to sink tissues. Required for correct sugar partitioning between source leaves and sink organs. The polypeptide is NDR1/HIN1-like protein 26 (Arabidopsis thaliana (Mouse-ear cress)).